The chain runs to 158 residues: Cytochrome c2 (158 aa).

The residue at position 1 (Gln-1) is a Pyrrolidone carboxylic acid. Positions 18, 21, 22, and 102 each coordinate heme c. The segment at 129–158 (AEAAPAADAAAPAAADAAAPAEPAAEGAAT) is disordered.

The protein belongs to the cytochrome c family. In terms of processing, binds 1 heme c group covalently per subunit.

It is found in the periplasm. Cytochrome c2 is found mainly in purple, non-sulfur, photosynthetic bacteria where it functions as the electron donor to the oxidized bacteriochlorophyll in the photophosphorylation pathway. However, it may also have a role in the respiratory chain and is found in some non-photosynthetic bacteria. The sequence is that of Cytochrome c2 from Fuscovulum blasticum (Rhodobacter blasticus).